Reading from the N-terminus, the 199-residue chain is 5'-deoxynucleotidase YfbR (199 aa).

Substrate is bound by residues 18–19 (RW) and His-33. The HD domain occupies 30–142 (VSEHSLQVAM…VKQADALCAY (113 aa)). The a divalent metal cation site is built by His-33, His-68, and Asp-69. Substrate is bound by residues Asp-69, 77–80 (DLPT), and Asp-137. Asp-137 is an a divalent metal cation binding site.

Belongs to the 5DNU family. As to quaternary structure, homodimer. A divalent metal cation is required as a cofactor.

Its subcellular location is the cytoplasm. The catalysed reaction is a 2'-deoxyribonucleoside 5'-phosphate + H2O = a 2'-deoxyribonucleoside + phosphate. Functionally, catalyzes the strictly specific dephosphorylation of 2'-deoxyribonucleoside 5'-monophosphates. The polypeptide is 5'-deoxynucleotidase YfbR (Escherichia coli (strain 55989 / EAEC)).